A 283-amino-acid polypeptide reads, in one-letter code: Phosphatidylserine decarboxylase proenzyme (283 aa).

Active-site charge relay system; for autoendoproteolytic cleavage activity residues include D96, H152, and S250. S250 (schiff-base intermediate with substrate; via pyruvic acid; for decarboxylase activity) is an active-site residue. A Pyruvic acid (Ser); by autocatalysis modification is found at S250.

The protein belongs to the phosphatidylserine decarboxylase family. PSD-B subfamily. Prokaryotic type I sub-subfamily. Heterodimer of a large membrane-associated beta subunit and a small pyruvoyl-containing alpha subunit. The cofactor is pyruvate. Is synthesized initially as an inactive proenzyme. Formation of the active enzyme involves a self-maturation process in which the active site pyruvoyl group is generated from an internal serine residue via an autocatalytic post-translational modification. Two non-identical subunits are generated from the proenzyme in this reaction, and the pyruvate is formed at the N-terminus of the alpha chain, which is derived from the carboxyl end of the proenzyme. The autoendoproteolytic cleavage occurs by a canonical serine protease mechanism, in which the side chain hydroxyl group of the serine supplies its oxygen atom to form the C-terminus of the beta chain, while the remainder of the serine residue undergoes an oxidative deamination to produce ammonia and the pyruvoyl prosthetic group on the alpha chain. During this reaction, the Ser that is part of the protease active site of the proenzyme becomes the pyruvoyl prosthetic group, which constitutes an essential element of the active site of the mature decarboxylase.

The protein resides in the cell membrane. The catalysed reaction is a 1,2-diacyl-sn-glycero-3-phospho-L-serine + H(+) = a 1,2-diacyl-sn-glycero-3-phosphoethanolamine + CO2. It participates in phospholipid metabolism; phosphatidylethanolamine biosynthesis; phosphatidylethanolamine from CDP-diacylglycerol: step 2/2. Catalyzes the formation of phosphatidylethanolamine (PtdEtn) from phosphatidylserine (PtdSer). The chain is Phosphatidylserine decarboxylase proenzyme from Acinetobacter baumannii (strain ATCC 17978 / DSM 105126 / CIP 53.77 / LMG 1025 / NCDC KC755 / 5377).